Reading from the N-terminus, the 265-residue chain is H-2 class II histocompatibility antigen, A-Q beta chain (265 aa).

The N-terminal stretch at 1-27 (MALQIPSLLLSAAVVVLMVLSSPRTEG) is a signal peptide. A beta-1 region spans residues 28 to 122 (GNSERHFVAQ…VETHTSLRRL (95 aa)). Residues 28 to 227 (GNSERHFVAQ…AQSESARSKM (200 aa)) lie on the Extracellular side of the membrane. Intrachain disulfides connect Cys42–Cys106 and Cys145–Cys201. An N-linked (GlcNAc...) asparagine glycan is attached at Asn46. The tract at residues 123–217 (EQPNVAISLS…LKSPITVEWR (95 aa)) is beta-2. In terms of domain architecture, Ig-like C1-type spans 125-213 (PNVAISLSRT…EHPSLKSPIT (89 aa)). The connecting peptide stretch occupies residues 218 to 227 (AQSESARSKM). The chain crosses the membrane as a helical span at residues 228 to 247 (LSGIGGCVLGVIFLGLGLFI). At 248–265 (RHRSQKGPRGPPPAGLLQ) the chain is on the cytoplasmic side.

It belongs to the MHC class II family. In terms of processing, ubiquitinated in immature dendritic cells leading to down-regulation of MHC class II.

It localises to the membrane. The polypeptide is H-2 class II histocompatibility antigen, A-Q beta chain (H2-Ab1) (Mus musculus (Mouse)).